The chain runs to 207 residues: Thiamine-phosphate synthase (207 aa).

4-amino-2-methyl-5-(diphosphooxymethyl)pyrimidine contacts are provided by residues 36 to 40 and Asp-68; that span reads QLRIK. Mg(2+)-binding residues include Asp-69 and Asp-88. Ser-106 serves as a coordination point for 4-amino-2-methyl-5-(diphosphooxymethyl)pyrimidine. Residue 132-134 participates in 2-[(2R,5Z)-2-carboxy-4-methylthiazol-5(2H)-ylidene]ethyl phosphate binding; it reads TQT. Lys-135 is a binding site for 4-amino-2-methyl-5-(diphosphooxymethyl)pyrimidine. 2-[(2R,5Z)-2-carboxy-4-methylthiazol-5(2H)-ylidene]ethyl phosphate contacts are provided by residues Gly-162 and 182 to 183; that span reads VS.

The protein belongs to the thiamine-phosphate synthase family. Mg(2+) serves as cofactor.

It catalyses the reaction 2-[(2R,5Z)-2-carboxy-4-methylthiazol-5(2H)-ylidene]ethyl phosphate + 4-amino-2-methyl-5-(diphosphooxymethyl)pyrimidine + 2 H(+) = thiamine phosphate + CO2 + diphosphate. The catalysed reaction is 2-(2-carboxy-4-methylthiazol-5-yl)ethyl phosphate + 4-amino-2-methyl-5-(diphosphooxymethyl)pyrimidine + 2 H(+) = thiamine phosphate + CO2 + diphosphate. The enzyme catalyses 4-methyl-5-(2-phosphooxyethyl)-thiazole + 4-amino-2-methyl-5-(diphosphooxymethyl)pyrimidine + H(+) = thiamine phosphate + diphosphate. It participates in cofactor biosynthesis; thiamine diphosphate biosynthesis; thiamine phosphate from 4-amino-2-methyl-5-diphosphomethylpyrimidine and 4-methyl-5-(2-phosphoethyl)-thiazole: step 1/1. Its function is as follows. Condenses 4-methyl-5-(beta-hydroxyethyl)thiazole monophosphate (THZ-P) and 2-methyl-4-amino-5-hydroxymethyl pyrimidine pyrophosphate (HMP-PP) to form thiamine monophosphate (TMP). This chain is Thiamine-phosphate synthase, found in Pyrococcus horikoshii (strain ATCC 700860 / DSM 12428 / JCM 9974 / NBRC 100139 / OT-3).